A 643-amino-acid polypeptide reads, in one-letter code: MAAAMIWWPRFLLLLCLTCKGSTFYVPGVAPINFHQNDPVEIKAVKLTSSRTQLPYEYYSLPFCQPNKITYKAENLGEVLRGDRIVNTPFQVLMNSEKKCEVLCGQSNKPVILTVEQSRLVAERITEEYYVHLIADNLPVATRLELYSSNRDSDDKKKEKDVQFEHGYRLGFTDVNKIYLHNHLSFILYYHREDTEEDQEHTYRVVRFEVIPQSIRLEDLKIDEKSSCTLPEGANSLPQEIDPTKENQLYFTYSVHWEESDIKWASRWDTYLTMSDVQIHWFSIINSVVVVFFLSGILSMIIIRTLRKDIANYNKEDDIEDTMEESGWKLVHGDVFRPPQYPMILSSLLGSGIQLFCMILIVIFVAMLGMLSPSSRGALMTTACFLFMFMGVFGGFSAGRLYRTLKGHRWKKGAFCTATLYPGVVFGICFVLNCFIWGKHSSGAVPFPTMVALLCMWFGISLPLVYLGYYFGFRKQPYDNPVRTNQIPRQIPEQRWYMNRFVGILMAGILPFGAMFIELFFIFSAIWENQFYYLFGFLFLVFIILVVSCSQISIVMVYFQLCAEDYRWWWRNFLVSGGSAFYVLVYAIFYFVNKLDIVEFIPSLLYFGYTTLMVLSFWLLTGTIGFYAAYMFVRKIYAAVKID.

Residues 1-23 (MAAAMIWWPRFLLLLCLTCKGST) form the signal peptide. Over 24–282 (FYVPGVAPIN…TMSDVQIHWF (259 aa)) the chain is Extracellular. The helical transmembrane segment at 283–303 (SIINSVVVVFFLSGILSMIII) threads the bilayer. Over 304–347 (RTLRKDIANYNKEDDIEDTMEESGWKLVHGDVFRPPQYPMILSS) the chain is Cytoplasmic. Position 313 is a phosphotyrosine (Tyr-313). Residues 348–368 (LLGSGIQLFCMILIVIFVAML) traverse the membrane as a helical segment. At 369-377 (GMLSPSSRG) the chain is on the extracellular side. The helical transmembrane segment at 378–398 (ALMTTACFLFMFMGVFGGFSA) threads the bilayer. The Cytoplasmic portion of the chain corresponds to 399–417 (GRLYRTLKGHRWKKGAFCT). Residues 418–438 (ATLYPGVVFGICFVLNCFIWG) traverse the membrane as a helical segment. Residues 439-450 (KHSSGAVPFPTM) are Extracellular-facing. The chain crosses the membrane as a helical span at residues 451–471 (VALLCMWFGISLPLVYLGYYF). Topologically, residues 472–502 (GFRKQPYDNPVRTNQIPRQIPEQRWYMNRFV) are cytoplasmic. A helical transmembrane segment spans residues 503 to 523 (GILMAGILPFGAMFIELFFIF). At 524–536 (SAIWENQFYYLFG) the chain is on the extracellular side. The helical transmembrane segment at 537–557 (FLFLVFIILVVSCSQISIVMV) threads the bilayer. Residues 558 to 571 (YFQLCAEDYRWWWR) lie on the Cytoplasmic side of the membrane. The helical transmembrane segment at 572-592 (NFLVSGGSAFYVLVYAIFYFV) threads the bilayer. Topologically, residues 593–599 (NKLDIVE) are extracellular. Residues 600–620 (FIPSLLYFGYTTLMVLSFWLL) traverse the membrane as a helical segment. Topologically, residues 621-643 (TGTIGFYAAYMFVRKIYAAVKID) are cytoplasmic.

The protein belongs to the nonaspanin (TM9SF) (TC 9.A.2) family.

Its subcellular location is the membrane. It localises to the golgi apparatus. The protein localises to the early endosome. Associates with proteins harboring glycine-rich transmembrane domains and ensures their efficient localization to the cell surface. The chain is Transmembrane 9 superfamily member 4 (Tm9sf4) from Rattus norvegicus (Rat).